The primary structure comprises 644 residues: Protein ecdysoneless homolog (644 aa).

Disordered stretches follow at residues 430-449, 496-537, 567-589, and 623-644; these read AVGK…QNYD, LGPR…SLKG, QVEP…TGES, and QSMG…PTKN. The span at 431-447 shows a compositional bias: basic and acidic residues; the sequence is VGKKESESVSKEEKEQN. The interval 439–644 is transcription activation; the sequence is VSKEEKEQNY…HRPTSKPTKN (206 aa). The interval 481-497 is involved in nuclear export; that stretch reads ITFDADSFLNYFDKILG. Positions 502-532 are acidic region required for transactivation activity; it reads ESDSDDLDDEDFECLDSDDDLDFETHEPGEE. Residues S503, S505, and S518 each carry the phosphoserine modification. The span at 503 to 523 shows a compositional bias: acidic residues; that stretch reads SDSDDLDDEDFECLDSDDDLD. The span at 524 to 534 shows a compositional bias: basic and acidic residues; the sequence is FETHEPGEEAS. Residues 567–577 show a composition bias toward polar residues; that stretch reads QVEPVSQTTDN.

It belongs to the ECD family. As to quaternary structure, interacts with TP53, MDM2, TXNIP. Interacts (phosphorylated) with PIH1D1. Interacts with RUVBL1 mediating the PIH1D1-independent association with the R2TP complex. Interacts with RB1, RBL1 and RBL2; ECD competes with E2F1 for binding to hypophospshorylated RB1. Interacts with EP300. Interacts with DDX39A. Post-translationally, phosphorylated predominantly by CK2 on two serine-containing clusters; involved in cell cycle regulation activity. As to expression, highly expressed in muscle and heart. Over-expressed in pancreatic and breast cancers.

The protein localises to the cytoplasm. The protein resides in the nucleus. In terms of biological role, regulator of p53/TP53 stability and function. Inhibits MDM2-mediated degradation of p53/TP53 possibly by cooperating in part with TXNIP. May be involved transcriptional regulation. In vitro has intrinsic transactivation activity enhanced by EP300. May be a transcriptional activator required for the expression of glycolytic genes. Involved in regulation of cell cycle progression. Proposed to disrupt Rb-E2F binding leading to transcriptional activation of E2F proteins. The cell cycle -regulating function may depend on its RUVBL1-mediated association with the R2TP complex. May play a role in regulation of pre-mRNA splicing. Participates together with DDX39A in mRNA nuclear export. This Homo sapiens (Human) protein is Protein ecdysoneless homolog (ECD).